A 407-amino-acid polypeptide reads, in one-letter code: Peptidase T (407 aa).

His-82 contributes to the Zn(2+) binding site. Asp-84 is an active-site residue. Residue Asp-143 participates in Zn(2+) binding. The Proton acceptor role is filled by Glu-177. Glu-178, Asp-200, and His-382 together coordinate Zn(2+).

It belongs to the peptidase M20B family. Zn(2+) serves as cofactor.

The protein localises to the cytoplasm. The enzyme catalyses Release of the N-terminal residue from a tripeptide.. Cleaves the N-terminal amino acid of tripeptides. The polypeptide is Peptidase T (Streptococcus pyogenes serotype M12 (strain MGAS2096)).